Consider the following 226-residue polypeptide: Enolase-phosphatase E1 (226 aa).

The protein belongs to the HAD-like hydrolase superfamily. MasA/MtnC family. As to quaternary structure, monomer. Mg(2+) serves as cofactor.

It carries out the reaction 5-methylsulfanyl-2,3-dioxopentyl phosphate + H2O = 1,2-dihydroxy-5-(methylsulfanyl)pent-1-en-3-one + phosphate. It participates in amino-acid biosynthesis; L-methionine biosynthesis via salvage pathway; L-methionine from S-methyl-5-thio-alpha-D-ribose 1-phosphate: step 3/6. Its pathway is amino-acid biosynthesis; L-methionine biosynthesis via salvage pathway; L-methionine from S-methyl-5-thio-alpha-D-ribose 1-phosphate: step 4/6. Bifunctional enzyme that catalyzes the enolization of 2,3-diketo-5-methylthiopentyl-1-phosphate (DK-MTP-1-P) into the intermediate 2-hydroxy-3-keto-5-methylthiopentenyl-1-phosphate (HK-MTPenyl-1-P), which is then dephosphorylated to form the acireductone 1,2-dihydroxy-3-keto-5-methylthiopentene (DHK-MTPene). This is Enolase-phosphatase E1 from Shewanella baltica (strain OS223).